Consider the following 148-residue polypeptide: Small ribosomal subunit protein uS13 (148 aa).

This sequence belongs to the universal ribosomal protein uS13 family. Part of the 30S ribosomal subunit. Forms a loose heterodimer with protein S19. Forms two bridges to the 50S subunit in the 70S ribosome.

Its function is as follows. Located at the top of the head of the 30S subunit, it contacts several helices of the 16S rRNA. In the 70S ribosome it contacts the 23S rRNA (bridge B1a) and protein L5 of the 50S subunit (bridge B1b), connecting the 2 subunits; these bridges are implicated in subunit movement. The protein is Small ribosomal subunit protein uS13 of Pyrococcus horikoshii (strain ATCC 700860 / DSM 12428 / JCM 9974 / NBRC 100139 / OT-3).